We begin with the raw amino-acid sequence, 536 residues long: Feruloyl esterase B (536 aa).

Positions 1–20 are cleaved as a signal peptide; it reads MKTSIVLSIVALFLTSKASA. The CBM10 domain occupies 21 to 59; the sequence is DCWSERLGWPCCSDSNAEVIYVDDDGDWGVENNDWCGIQ. Residues 22 to 59 are cellulose-binding; it reads CWSERLGWPCCSDSNAEVIYVDDDGDWGVENNDWCGIQ. N65 is a glycosylation site (N-linked (GlcNAc...) asparagine). Tandem repeats lie at residues 78–90, 91–103, 104–116, 117–129, 134–146, 151–163, 164–176, 181–193, 194–206, 211–223, 224–236, and 237–249. Residues 78–249 form a 12 X 13 AA repeats of N-Q-G-G-G-M-[PQ]-W-G-D-F-G-G region; sequence NQGGGMPWGD…GGMQWGDFGG (172 aa). Residues 203 to 252 are compositionally biased toward gly residues; that stretch reads DFGGNQGGNQGGGMPWGDFGGNQGGGMQWGDFGGNQGGGMQWGDFGGNQG. The disordered stretch occupies residues 203–273; the sequence is DFGGNQGGNQ…SGPTVEYSTD (71 aa). The tract at residues 257-536 is catalytic; the sequence is WGNQGGNSGP…WDFVKQFSLP (280 aa).

In terms of assembly, component of the multienzyme cellulase-hemicellulase complex.

The protein localises to the secreted. It carries out the reaction feruloyl-polysaccharide + H2O = ferulate + polysaccharide.. With respect to regulation, inhibited by the specific serine esterase inhibitor AEBSF. Functionally, involved in degradation of plant cell walls. Hydrolyzes of the feruloyl-arabinose ester bond in arabinoxylans as well as the feruloyl-galactose and feruloyl-arabinose ester bonds in pectin. This is Feruloyl esterase B (ESTA) from Piromyces equi.